Consider the following 403-residue polypeptide: Na(+)-translocating NADH-quinone reductase subunit B (403 aa).

The next 3 helical transmembrane spans lie at Ile-56–Gly-76, Leu-114–Val-134, and Leu-165–Ala-185. FMN phosphoryl threonine is present on Thr-231. 5 consecutive transmembrane segments (helical) span residues Gly-260–Met-280, Ile-287–Ser-307, Met-312–Phe-332, Trp-348–Phe-368, and Gly-371–Ala-391.

This sequence belongs to the NqrB/RnfD family. As to quaternary structure, composed of six subunits; NqrA, NqrB, NqrC, NqrD, NqrE and NqrF. The cofactor is FMN.

It localises to the cell inner membrane. It carries out the reaction a ubiquinone + n Na(+)(in) + NADH + H(+) = a ubiquinol + n Na(+)(out) + NAD(+). Its function is as follows. NQR complex catalyzes the reduction of ubiquinone-1 to ubiquinol by two successive reactions, coupled with the transport of Na(+) ions from the cytoplasm to the periplasm. NqrA to NqrE are probably involved in the second step, the conversion of ubisemiquinone to ubiquinol. This Pseudoalteromonas atlantica (strain T6c / ATCC BAA-1087) protein is Na(+)-translocating NADH-quinone reductase subunit B.